Reading from the N-terminus, the 521-residue chain is MSASEGMKFKFHSGEKVLCFEPDPTKARVLYDAKIVDVIVGKDEKGRKIPEYLIHFNGWNRSWDRWAAEDHVLRDTDENRRLQRKLARKAVARLRSTGRKKKRCRLPGVDSVLKGLPTEEKDENDENSLSSSSDCSENKDEEISEESDIEEKTEVKEEPELQTRREMEERTITIEIPEVLKKQLEDDCYYINRRKRLVKLPCQTNIITILESYVKHFAINAAFSANERPRHHHVMPHANMNVHYIPAEKNVDLCKEMVDGLRITFDYTLPLVLLYPYEQAQYKKVTSSKFFLPIKESATSTNRSQEELSPSPPLLNPSTPQSTESQPTTGEPATPKRRKAEPEALQSLRRSTRHSANCDRLSESSASPQPKRRQQDTSASMPKLFLHLEKKTPVHSRSSSPIPLTPSKEGSAVFAGFEGRRTNEINEVLSWKLVPDNYPPGDQPPPPSYIYGAQHLLRLFVKLPEILGKMSFSEKNLKALLKHFDLFLRFLAEYHDDFFPESAYVAACEAHYSTKNPRAIY.

One can recognise a Tudor-knot domain in the interval 13–71; sequence SGEKVLCFEPDPTKARVLYDAKIVDVIVGKDEKGRKIPEYLIHFNGWNRSWDRWAAEDH. Disordered regions lie at residues 114-166 and 298-409; these read KGLP…TRRE and ATST…PSKE. Acidic residues predominate over residues 139-149; it reads KDEEISEESDI. The segment covering 150 to 166 has biased composition (basic and acidic residues); it reads EEKTEVKEEPELQTRRE. The region spanning 168-517 is the MRG domain; sequence EERTITIEIP…CEAHYSTKNP (350 aa). The segment at 290-440 is required for the histone acetyltransferase activity of the MSL complex; the sequence is FFLPIKESAT…WKLVPDNYPP (151 aa). A phosphoserine mark is found at Ser-309 and Ser-311. The segment covering 316-329 has biased composition (low complexity); the sequence is NPSTPQSTESQPTT. Residues Ser-367 and Ser-400 each carry the phosphoserine modification. Thr-405 is subject to Phosphothreonine. Phosphoserine occurs at positions 407 and 411.

As to quaternary structure, component of the MSL histone acetyltransferase complex at least composed of the KAT8/MOF, MSL1/hampin, MSL2 and MSL3. Interacts (via the MRG domain) with MSL1 and KAT8/MOF. As to expression, expressed in many tissues including liver, pancreas, heart, lung, kidney, skeletal muscle, brain, and placenta, with highest expression in skeletal muscle and heart.

It is found in the nucleus. Non-catalytic component of the MSL histone acetyltransferase complex, a multiprotein complex that mediates the majority of histone H4 acetylation at 'Lys-16' (H4K16ac), an epigenetic mark that prevents chromatin compaction. The MSL complex is required for chromosome stability and genome integrity by maintaining homeostatic levels of H4K16ac. The MSL complex is also involved in gene dosage by promoting up-regulation of genes expressed by the X chromosome. X up-regulation is required to compensate for autosomal biallelic expression. The MSL complex also participates in gene dosage compensation by promoting expression of Tsix non-coding RNA. Acts as a histone reader that specifically recognizes and binds histone H4 monomethylated at 'Lys-20' (H4K20Me1) in a DNA-dependent manner and is proposed to be involved in chromosomal targeting of the MSL complex. May play a role X inactivation in females. The chain is MSL complex subunit 3 from Homo sapiens (Human).